A 125-amino-acid polypeptide reads, in one-letter code: Morphine 6-dehydrogenase (125 aa).

Residues 9–18 and 74–111 contribute to the NADP(+) site; these read GHSIPVLGFI and SALGSSRDPWKQSPALIALRYQLQRGVVVLAKSFIERE.

It belongs to the aldo/keto reductase family. As to quaternary structure, monomer. The N-terminus is blocked.

It localises to the cytoplasm. It catalyses the reaction morphine + NAD(+) = morphinone + NADH + H(+). The catalysed reaction is morphine + NADP(+) = morphinone + NADPH + H(+). Strongly inhibited by sulfhydryl reagents and quercetin, but not by pyrazole, barbital and indomethacine. Functionally, catalyzes the dehydrogenation of morphine to morphinone. Uses both NAD and NADP, but the activity is much greater with NAD than with NADP. The sequence is that of Morphine 6-dehydrogenase from Oryctolagus cuniculus (Rabbit).